Here is a 161-residue protein sequence, read N- to C-terminus: Anaerobic nitrite reductase Glb1-1 (161 aa).

In terms of domain architecture, Globin spans 8–157; that stretch reads CFTEEQEALV…LVGAIKSEMK (150 aa). Positions 41-45 match the Homodimerization motif; sequence EIAPS. Heme b is bound by residues serine 51, lysine 65, histidine 69, lysine 99, threonine 103, and histidine 104. Residues 111 to 123 carry the Homodimerization motif; that stretch reads NEHFEVTKFALLD.

The protein belongs to the plant globin family. As to quaternary structure, homodimer. It depends on heme b as a cofactor. In terms of tissue distribution, mainly expressed in root nodules, and, to a lower extent, in leaves, roots, stems, flowers and fruits. Accumulates in mature root nodules.

It carries out the reaction Fe(III)-heme b-[protein] + nitric oxide + H2O = Fe(II)-heme b-[protein] + nitrite + 2 H(+). In terms of biological role, phytoglobin that reduces nitrite to nitric oxide (NO) under anoxic conditions (e.g. during flooding or in waterlogged soil) and upon root nodulation. Required for general plant development and during nodulation, especially for the onset of symbiosis. Monitors nitric oxide (NO) levels during early phase of the nitrogen-fixing symbiosis and buffers oxygen in functioning nodules. May not function as an oxygen storage or transport protein. Has an unusually high affinity for O(2) through a hexacoordinate heme iron because of a very low dissociation constant. This chain is Anaerobic nitrite reductase Glb1-1, found in Lotus japonicus (Lotus corniculatus var. japonicus).